A 346-amino-acid chain; its full sequence is Anthranilate phosphoribosyltransferase (346 aa).

5-phospho-alpha-D-ribose 1-diphosphate-binding positions include G80, G83–D84, T88, N90–T93, K108–S116, and S120. G80 contacts anthranilate. Residue S92 participates in Mg(2+) binding. N111 contacts anthranilate. Residue R166 coordinates anthranilate. D225 and E226 together coordinate Mg(2+).

The protein belongs to the anthranilate phosphoribosyltransferase family. As to quaternary structure, homodimer. The cofactor is Mg(2+).

The enzyme catalyses N-(5-phospho-beta-D-ribosyl)anthranilate + diphosphate = 5-phospho-alpha-D-ribose 1-diphosphate + anthranilate. The protein operates within amino-acid biosynthesis; L-tryptophan biosynthesis; L-tryptophan from chorismate: step 2/5. In terms of biological role, catalyzes the transfer of the phosphoribosyl group of 5-phosphorylribose-1-pyrophosphate (PRPP) to anthranilate to yield N-(5'-phosphoribosyl)-anthranilate (PRA). This is Anthranilate phosphoribosyltransferase from Desulforudis audaxviator (strain MP104C).